A 312-amino-acid chain; its full sequence is Acetyl-coenzyme A carboxylase carboxyl transferase subunit alpha (312 aa).

The CoA carboxyltransferase C-terminal domain maps to 36-286 (RLDKEVKSIY…KEYFLDALRT (251 aa)).

The protein belongs to the AccA family. In terms of assembly, acetyl-CoA carboxylase is a heterohexamer composed of biotin carboxyl carrier protein (AccB), biotin carboxylase (AccC) and two subunits each of ACCase subunit alpha (AccA) and ACCase subunit beta (AccD).

The protein resides in the cytoplasm. The catalysed reaction is N(6)-carboxybiotinyl-L-lysyl-[protein] + acetyl-CoA = N(6)-biotinyl-L-lysyl-[protein] + malonyl-CoA. It participates in lipid metabolism; malonyl-CoA biosynthesis; malonyl-CoA from acetyl-CoA: step 1/1. In terms of biological role, component of the acetyl coenzyme A carboxylase (ACC) complex. First, biotin carboxylase catalyzes the carboxylation of biotin on its carrier protein (BCCP) and then the CO(2) group is transferred by the carboxyltransferase to acetyl-CoA to form malonyl-CoA. This Helicobacter pylori (strain J99 / ATCC 700824) (Campylobacter pylori J99) protein is Acetyl-coenzyme A carboxylase carboxyl transferase subunit alpha.